A 201-amino-acid polypeptide reads, in one-letter code: uncharacterized protein (201 aa).

Residues Ile11–Leu31 traverse the membrane as a helical segment.

The protein localises to the membrane. This is an uncharacterized protein from Acanthamoeba polyphaga mimivirus (APMV).